We begin with the raw amino-acid sequence, 548 residues long: MAAKDEKFGNEARIKMLRGVNVLADAVKVTLGPKGRNVVLDKSFGAPSITKDGVSVAREIELEDKFENMGAQMVKEVASKANDAAGDGTTTATLLAQSIVNEGLKAVAAGMNPMDLKRGIDKAVISAVEELKNLSVPCSDSKAITQVGTISANADEKVGALIAEAMEKVGNDGVITVEEGTGLQNELEVVKGMQFDRGYLSPYFINKPETGVVELENPYILMADKKISNVREMLPILESVAKSGKPLLIISEDLEGEALATLVVNSMRGIVKVAAVKAPGFGDRRKAMLQDISVLTGGSVISEELAMDLEKSTLEDLGQAKRVVINKDTTTIIGGVGEKQAIQSRISQIRQEIQEATSDYDKEKLNERLAKLSGGVAVLKVGAATEVEMKEKKARVEDALHATRAAVEEGVVAGGGVALVRVAGKISNLRGHNEDQNVGIRVALRAMEAPLRQIVSNSGEEPSVVTNNVKDGKGNYGYNAATDEYGDMIDFGILDPTKVTRSALQYAASVAGLMITTECMVTDLPKEDKTSDASSSPAGGMGGMGGMM.

ATP is bound by residues 30-33, Lys51, 87-91, Gly415, 479-481, and Asp495; these read TLGP, DGTTT, and NAA. The interval 525–548 is disordered; that stretch reads PKEDKTSDASSSPAGGMGGMGGMM. Positions 539–548 are enriched in gly residues; the sequence is GGMGGMGGMM.

Belongs to the chaperonin (HSP60) family. In terms of assembly, forms a cylinder of 14 subunits composed of two heptameric rings stacked back-to-back. Interacts with the co-chaperonin GroES.

The protein localises to the cytoplasm. It carries out the reaction ATP + H2O + a folded polypeptide = ADP + phosphate + an unfolded polypeptide.. In terms of biological role, together with its co-chaperonin GroES, plays an essential role in assisting protein folding. The GroEL-GroES system forms a nano-cage that allows encapsulation of the non-native substrate proteins and provides a physical environment optimized to promote and accelerate protein folding. This is Chaperonin GroEL from Buchnera aphidicola subsp. Rhopalosiphum maidis.